A 414-amino-acid chain; its full sequence is NAD-specific glutamate dehydrogenase (414 aa).

Lysine 70 and lysine 94 together coordinate substrate. Lysine 106 (proton donor) is an active-site residue. NAD(+) is bound by residues threonine 190 and asparagine 221. Serine 348 contacts substrate.

The protein belongs to the Glu/Leu/Phe/Val dehydrogenases family. In terms of assembly, homohexamer.

It catalyses the reaction L-glutamate + NAD(+) + H2O = 2-oxoglutarate + NH4(+) + NADH + H(+). The protein is NAD-specific glutamate dehydrogenase (gluD) of Staphylococcus aureus (strain COL).